A 229-amino-acid polypeptide reads, in one-letter code: ATP-dependent Clp protease proteolytic subunit (229 aa).

Catalysis depends on Ser101, which acts as the Nucleophile. The active site involves His126.

The protein belongs to the peptidase S14 family. In terms of assembly, component of the chloroplastic Clp protease core complex.

The protein localises to the plastid. The protein resides in the chloroplast stroma. It catalyses the reaction Hydrolysis of proteins to small peptides in the presence of ATP and magnesium. alpha-casein is the usual test substrate. In the absence of ATP, only oligopeptides shorter than five residues are hydrolyzed (such as succinyl-Leu-Tyr-|-NHMec, and Leu-Tyr-Leu-|-Tyr-Trp, in which cleavage of the -Tyr-|-Leu- and -Tyr-|-Trp bonds also occurs).. Its function is as follows. Cleaves peptides in various proteins in a process that requires ATP hydrolysis. Has a chymotrypsin-like activity. Plays a major role in the degradation of misfolded proteins. The chain is ATP-dependent Clp protease proteolytic subunit from Mesostigma viride (Green alga).